An 840-amino-acid polypeptide reads, in one-letter code: SLIT and NTRK-like protein 6 (840 aa).

Positions 1–18 (MKLWTYLLYPSLLACLSL) are cleaved as a signal peptide. One can recognise an LRRNT 1 domain in the interval 22 to 67 (SPMPSVRGSCDTLCNCEEKDGIMIINCEEKGINKLSQISVPPSRPF). Over 23 to 609 (PMPSVRGSCD…LTDAVPLSVL (587 aa)) the chain is Extracellular. LRR repeat units lie at residues 89–110 (NALS…AFNG), 113–134 (LLKQ…TFHG), 137–158 (NLEF…AFSK), 161–182 (RLKV…IFRF), and 184–205 (PLTH…GFLE). An LRRCT 1 domain is found at 218–269 (NKWACNCELLQLKNWLENMPPQSIIGDVICYSPPPFKGSVLSRLKKESFCPT). The region spanning 319-360 (PSTQLPVPYCPIPCNCKVLSPSGLLIHCQERNIESLSDLQPP) is the LRRNT 2 domain. LRR repeat units lie at residues 363 to 384 (NPRK…DLTD), 387 to 408 (TLEM…SFMN), 411 to 432 (RLQK…MFLG), 435 to 456 (SLEY…TFNP), 459 to 480 (KLKV…IFLG), and 482 to 503 (PLTR…NILD). In terms of domain architecture, LRRCT 2 spans 516 to 567 (NPWDCSCDLVGLQQWIHKLGKGTMTDDILCTSPGHLDKKELKALNSDLLCPG). Residues 610-630 (ILGLLIVFITIVFCAAGIVVF) form a helical membrane-spanning segment. Residues 631–840 (VLHRRRRYKK…DYLEVLEQQT (210 aa)) lie on the Cytoplasmic side of the membrane. The span at 717-726 (QRSLLERENH) shows a compositional bias: basic and acidic residues. Residues 717-736 (QRSLLERENHSPLTGSNMKY) form a disordered region. Positions 727-736 (SPLTGSNMKY) are enriched in polar residues.

The protein belongs to the SLITRK family. In terms of tissue distribution, in the embryo, expressed in otic cyst, lateral trunk epidermis and underlying mesodermal tissue, limb bud, maxillary process, cochlea, retina, tongue, tooth primordium, central nervous system, and primordia of visceral organs including lung, gastrointestinal tract and pancreas. In the central nervous system, expressed primarily in dorsal thalamus, cerebellum and medulla.

The protein resides in the cell membrane. In terms of biological role, regulator of neurite outgrowth required for normal hearing and vision. The protein is SLIT and NTRK-like protein 6 (Slitrk6) of Mus musculus (Mouse).